Reading from the N-terminus, the 86-residue chain is Small ribosomal subunit protein bS16c (86 aa).

Belongs to the bacterial ribosomal protein bS16 family.

It localises to the plastid. The protein localises to the chloroplast. This chain is Small ribosomal subunit protein bS16c, found in Liriodendron tulipifera (Tuliptree).